The following is a 213-amino-acid chain: 3-isopropylmalate dehydratase small subunit (213 aa).

Belongs to the LeuD family. LeuD type 1 subfamily. In terms of assembly, heterodimer of LeuC and LeuD.

The enzyme catalyses (2R,3S)-3-isopropylmalate = (2S)-2-isopropylmalate. The protein operates within amino-acid biosynthesis; L-leucine biosynthesis; L-leucine from 3-methyl-2-oxobutanoate: step 2/4. Functionally, catalyzes the isomerization between 2-isopropylmalate and 3-isopropylmalate, via the formation of 2-isopropylmaleate. This chain is 3-isopropylmalate dehydratase small subunit, found in Neisseria meningitidis serogroup C (strain 053442).